The chain runs to 275 residues: NH(3)-dependent NAD(+) synthetase (275 aa).

46 to 53 (GISGGQDS) is a binding site for ATP. D52 is a binding site for Mg(2+). R140 contacts deamido-NAD(+). T160 serves as a coordination point for ATP. Residue E165 participates in Mg(2+) binding. Residues K173 and D180 each contribute to the deamido-NAD(+) site. The ATP site is built by K189 and T211. Deamido-NAD(+) is bound at residue 260–261 (HK).

It belongs to the NAD synthetase family. In terms of assembly, homodimer.

It carries out the reaction deamido-NAD(+) + NH4(+) + ATP = AMP + diphosphate + NAD(+) + H(+). Its pathway is cofactor biosynthesis; NAD(+) biosynthesis; NAD(+) from deamido-NAD(+) (ammonia route): step 1/1. Functionally, catalyzes the ATP-dependent amidation of deamido-NAD to form NAD. Uses ammonia as a nitrogen source. This is NH(3)-dependent NAD(+) synthetase from Escherichia coli O45:K1 (strain S88 / ExPEC).